The chain runs to 293 residues: Glycine--tRNA ligase alpha subunit (293 aa).

Belongs to the class-II aminoacyl-tRNA synthetase family. Tetramer of two alpha and two beta subunits.

The protein resides in the cytoplasm. It carries out the reaction tRNA(Gly) + glycine + ATP = glycyl-tRNA(Gly) + AMP + diphosphate. The chain is Glycine--tRNA ligase alpha subunit from Picosynechococcus sp. (strain ATCC 27264 / PCC 7002 / PR-6) (Agmenellum quadruplicatum).